The sequence spans 230 residues: Ribonuclease 3 (230 aa).

One can recognise an RNase III domain in the interval 5 to 134 (EALLENSFNI…FLGALLLDKG (130 aa)). E47 lines the Mg(2+) pocket. D51 is a catalytic residue. Mg(2+)-binding residues include D120 and E123. The active site involves E123. Residues 160 to 229 (DYKTCLQELL…AKNALAQLSE (70 aa)) enclose the DRBM domain.

It belongs to the ribonuclease III family. As to quaternary structure, homodimer. Requires Mg(2+) as cofactor.

The protein resides in the cytoplasm. It carries out the reaction Endonucleolytic cleavage to 5'-phosphomonoester.. Functionally, digests double-stranded RNA. Involved in the processing of primary rRNA transcript to yield the immediate precursors to the large and small rRNAs (23S and 16S). Processes some mRNAs, and tRNAs when they are encoded in the rRNA operon. Processes pre-crRNA and tracrRNA of type II CRISPR loci if present in the organism. This is Ribonuclease 3 from Streptococcus equi subsp. zooepidemicus (strain H70).